We begin with the raw amino-acid sequence, 1049 residues long: Ataxin-2-like protein (1049 aa).

Met-1 carries the post-translational modification N-acetylmethionine. Residues 1-54 (MLKPQPPQQTSQPQQPPPTQQAVARRSPGGTSPPNGGLPGPLTATAAPPGPPAA) form a disordered region. Ser-27 is subject to Phosphoserine. Thr-45 carries the phosphothreonine modification. The segment at 96–119 (SVRGQTTGKGPPQSPVFEGVYNNS) is interaction with MPL. Ser-109 is subject to Phosphoserine. Phosphotyrosine is present on Tyr-116. Residues 120-197 (RMLHFLTAVV…VLLVHFRNVD (78 aa)) form the Sm domain. At Lys-205 the chain carries N6-acetyllysine. The residue at position 236 (Ser-236) is a Phosphoserine. Tyr-262 is modified (phosphotyrosine). A Phosphoserine modification is found at Ser-304. Tyr-307 is modified (phosphotyrosine). A compositionally biased stretch (basic and acidic residues) spans 314–326 (ENDDGRTEEEKHS). Disordered regions lie at residues 314-522 (ENDD…RNLE), 554-573 (QFKLQPSSSPETGLDPFPSR), 578-704 (EAKG…LTAG), 736-772 (VSNSVPGQQGKYRGAKGSLPPQRSDQHQPASAPPMMQ), 824-852 (SNPRMLTSGSHPQAIVSSSTPQYPAAEQP), 868-944 (HATQ…SSFP), and 999-1049 (PQGH…PPGN). Residues 328-340 (VQRQGSGRESPSL) are compositionally biased toward polar residues. Phosphoserine is present on residues Ser-333 and Ser-337. Lys-346 participates in a covalent cross-link: Glycyl lysine isopeptide (Lys-Gly) (interchain with G-Cter in SUMO2). Residue Tyr-347 is modified to Phosphotyrosine. Asymmetric dimethylarginine is present on Arg-359. Low complexity predominate over residues 361-378 (GVRCSSSRGGRPGLSSLP). Ser-389, Ser-407, and Ser-453 each carry phosphoserine. Residues 454 to 466 (PKSAAPAPVSASC) are compositionally biased toward low complexity. Residues 475 to 487 (VASSASIPVTSSV) are compositionally biased toward polar residues. Residues Ser-496 and Ser-499 each carry the phosphoserine modification. Over residues 508–519 (DVKELPTKEPSR) the composition is skewed to basic and acidic residues. 3 positions are modified to phosphoserine: Ser-560, Ser-561, and Ser-562. Positions 578–587 (EAKGKEKEVD) are enriched in basic and acidic residues. Phosphoserine is present on Ser-597. At Thr-635 the chain carries Phosphothreonine. Residues Ser-637, Ser-677, Ser-683, and Ser-687 each carry the phosphoserine modification. Positions 681–697 (STSTPTSPGPRTHSTPS) are enriched in low complexity. Polar residues-rich tracts occupy residues 824–845 (SNPRMLTSGSHPQAIVSSSTPQ) and 878–902 (QPATTPTGSQPQSQHAAPSPVQHQA). Residues 935–944 (SAQSPQSSFP) show a composition bias toward low complexity. Positions 1033 to 1042 (QVQSHPSQQL) are enriched in polar residues.

This sequence belongs to the ataxin-2 family. In terms of assembly, interacts with MPL/TPOR and EPOR and dissociates after ligand stimulation. Interacts with DDX6, G3BP, and ATXN2. Interacts with PRMT1. Interacts with CIC and ATXN1. In terms of processing, thrombopoietin triggers the phosphorylation on tyrosine residues in a way that is dependent on MPL C-terminal domain. Post-translationally, asymmetrically dimethylated. Probably methylated by PRMT1. Expressed in cerebellum.

It localises to the membrane. Its subcellular location is the cytoplasm. It is found in the nucleus speckle. The protein resides in the cytoplasmic granule. In terms of biological role, involved in the regulation of stress granule and P-body formation. This chain is Ataxin-2-like protein (Atxn2l), found in Mus musculus (Mouse).